The chain runs to 354 residues: Phospho-N-acetylmuramoyl-pentapeptide-transferase (354 aa).

Helical transmembrane passes span phenylalanine 23–alanine 43, threonine 66–alanine 86, leucine 88–phenylalanine 108, leucine 130–leucine 150, phenylalanine 161–alanine 181, glycine 193–cysteine 213, valine 230–phenylalanine 250, valine 257–methionine 277, isoleucine 282–valine 302, and lysine 331–leucine 351.

Belongs to the glycosyltransferase 4 family. MraY subfamily. It depends on Mg(2+) as a cofactor.

It localises to the cell inner membrane. It carries out the reaction UDP-N-acetyl-alpha-D-muramoyl-L-alanyl-gamma-D-glutamyl-meso-2,6-diaminopimeloyl-D-alanyl-D-alanine + di-trans,octa-cis-undecaprenyl phosphate = di-trans,octa-cis-undecaprenyl diphospho-N-acetyl-alpha-D-muramoyl-L-alanyl-D-glutamyl-meso-2,6-diaminopimeloyl-D-alanyl-D-alanine + UMP. It functions in the pathway cell wall biogenesis; peptidoglycan biosynthesis. Catalyzes the initial step of the lipid cycle reactions in the biosynthesis of the cell wall peptidoglycan: transfers peptidoglycan precursor phospho-MurNAc-pentapeptide from UDP-MurNAc-pentapeptide onto the lipid carrier undecaprenyl phosphate, yielding undecaprenyl-pyrophosphoryl-MurNAc-pentapeptide, known as lipid I. This chain is Phospho-N-acetylmuramoyl-pentapeptide-transferase, found in Campylobacter curvus (strain 525.92).